A 314-amino-acid chain; its full sequence is Epithelial cell adhesion molecule (314 aa).

An N-terminal signal peptide occupies residues 1–23 (MAPPQVLAFGLLLAAATATFAAA). Residues 24–265 (QEECVCENYK…APEFSMQGLK (242 aa)) lie on the Extracellular side of the membrane. 6 cysteine pairs are disulfide-bonded: Cys-27–Cys-46, Cys-29–Cys-59, Cys-38–Cys-48, Cys-66–Cys-99, Cys-110–Cys-116, and Cys-118–Cys-135. The Thyroglobulin type-1 domain maps to 63–135 (AAKCLVMKAE…RTDKDTEITC (73 aa)). N-linked (GlcNAc...) asparagine; partial glycosylation occurs at Asn-74. Asn-111 carries an N-linked (GlcNAc...) asparagine glycan. N-linked (GlcNAc...) asparagine glycosylation is present at Asn-198. Residues 266 to 288 (AGVIAVIVVVVIAVVAGIVVLVI) traverse the membrane as a helical segment. Residues 289–314 (SRKKRMAKYEKAEIKEMGEMHRELNA) are Cytoplasmic-facing.

The protein belongs to the EPCAM family. Monomer. Interacts with phosphorylated CLDN7. Hyperglycosylated in carcinoma tissue as compared with autologous normal epithelia. Glycosylation at Asn-198 is crucial for protein stability. Highly and selectively expressed by undifferentiated rather than differentiated embryonic stem cells (ESC). Levels rapidly diminish as soon as ESC's differentiate (at protein levels). Expressed in almost all epithelial cell membranes but not on mesodermal or neural cell membranes. Found on the surface of adenocarcinoma.

Its subcellular location is the lateral cell membrane. The protein resides in the cell junction. The protein localises to the tight junction. Its function is as follows. May act as a physical homophilic interaction molecule between intestinal epithelial cells (IECs) and intraepithelial lymphocytes (IELs) at the mucosal epithelium for providing immunological barrier as a first line of defense against mucosal infection. Plays a role in embryonic stem cells proliferation and differentiation. Up-regulates the expression of FABP5, MYC and cyclins A and E. This Homo sapiens (Human) protein is Epithelial cell adhesion molecule (EPCAM).